Reading from the N-terminus, the 417-residue chain is Serine hydroxymethyltransferase (417 aa).

Residues Leu-121 and 125 to 127 contribute to the (6S)-5,6,7,8-tetrahydrofolate site; that span reads GHL. Lys-229 carries the N6-(pyridoxal phosphate)lysine modification. Position 355 to 357 (355 to 357) interacts with (6S)-5,6,7,8-tetrahydrofolate; the sequence is SPF.

Belongs to the SHMT family. As to quaternary structure, homodimer. It depends on pyridoxal 5'-phosphate as a cofactor.

The protein resides in the cytoplasm. It catalyses the reaction (6R)-5,10-methylene-5,6,7,8-tetrahydrofolate + glycine + H2O = (6S)-5,6,7,8-tetrahydrofolate + L-serine. The protein operates within one-carbon metabolism; tetrahydrofolate interconversion. Its pathway is amino-acid biosynthesis; glycine biosynthesis; glycine from L-serine: step 1/1. Catalyzes the reversible interconversion of serine and glycine with tetrahydrofolate (THF) serving as the one-carbon carrier. This reaction serves as the major source of one-carbon groups required for the biosynthesis of purines, thymidylate, methionine, and other important biomolecules. Also exhibits THF-independent aldolase activity toward beta-hydroxyamino acids, producing glycine and aldehydes, via a retro-aldol mechanism. The protein is Serine hydroxymethyltransferase of Photorhabdus laumondii subsp. laumondii (strain DSM 15139 / CIP 105565 / TT01) (Photorhabdus luminescens subsp. laumondii).